A 503-amino-acid polypeptide reads, in one-letter code: Cysteine desulfurase, mitochondrial (503 aa).

Residues 1 to 27 constitute a mitochondrion transit peptide; sequence MSNIAPQVLRHASRACSRRLSLSASLV. Positions 34 to 50 are enriched in low complexity; that stretch reads RTVTGSGSGGRRYVSGS. The interval 34–58 is disordered; the sequence is RTVTGSGSGGRRYVSGSQRHNAQAQ. Residues 172-173, N254, Q282, and 302-304 contribute to the pyridoxal 5'-phosphate site; these read AT and SGH. N6-(pyridoxal phosphate)lysine is present on K305. Pyridoxal 5'-phosphate is bound at residue T342. C427 acts as the Cysteine persulfide intermediate in catalysis. [2Fe-2S] cluster is bound at residue C427.

Belongs to the class-V pyridoxal-phosphate-dependent aminotransferase family. NifS/IscS subfamily. Pyridoxal 5'-phosphate serves as cofactor.

It localises to the mitochondrion. It catalyses the reaction (sulfur carrier)-H + L-cysteine = (sulfur carrier)-SH + L-alanine. Catalyzes the removal of elemental sulfur from cysteine to produce alanine. It supplies the inorganic sulfur for iron-sulfur (Fe-S) clusters. Plays a role in both tRNA-processing and mitochondrial metabolism. Involved in the 2-thio-modification of both 5-carboxymethylaminomethyl-2-thiouridine in mitochondrial tRNAs and 5-methoxycarbonylmethyl-2-thiouridine (mcm5s2U) in cytoplasmic tRNAs. This chain is Cysteine desulfurase, mitochondrial, found in Arthroderma benhamiae (strain ATCC MYA-4681 / CBS 112371) (Trichophyton mentagrophytes).